A 345-amino-acid chain; its full sequence is MTSKPMTRRPTANNHRNRSPETAKKLGQLHPRNPHQGRYDFVALTHALPELAKHTITNPKGEPTINFSDSAAVRVLNQALLAHYYGVKFWDIPEGYLCPPIPGRADYIHYIADLLAQTTHVNKDNTPPTGKEIHALDIGTGASAIYPIVGSQSYGWRFTASDIDPISVNTAALICETNPKLKSAVKVKLQPEPKRIFANIIGRQDYFDVVVCNPPFHASLEEAMEANSRKQHNLQRHRGKNENEQISRSSTKSGNAAQNLNFGGQHKELWSEGGEIAFLTKMAKESQDFAEHVGWFTTLVSKSENVKPMQLLLKQLGVAQMRIIEMSQGQKSTRILAWRFNTDEE.

Polar residues predominate over residues 1 to 14 (MTSKPMTRRPTANN). Disordered regions lie at residues 1–35 (MTSKPMTRRPTANNHRNRSPETAKKLGQLHPRNPH) and 225–258 (EANSRKQHNLQRHRGKNENEQISRSSTKSGNAAQ). Residues 229–239 (RKQHNLQRHRG) show a composition bias toward basic residues. A compositionally biased stretch (polar residues) spans 246–258 (ISRSSTKSGNAAQ).

Belongs to the methyltransferase superfamily. METTL16/RlmF family.

The protein resides in the cytoplasm. It carries out the reaction adenosine(1618) in 23S rRNA + S-adenosyl-L-methionine = N(6)-methyladenosine(1618) in 23S rRNA + S-adenosyl-L-homocysteine + H(+). Specifically methylates the adenine in position 1618 of 23S rRNA. In Psychrobacter arcticus (strain DSM 17307 / VKM B-2377 / 273-4), this protein is Ribosomal RNA large subunit methyltransferase F.